A 286-amino-acid polypeptide reads, in one-letter code: Beta-lactamase SHV-2 (286 aa).

Residues 1–21 form the signal peptide; that stretch reads MRYIRLCIISLLATLPLAVHA. Ser66 acts as the Acyl-ester intermediate in catalysis. Cysteines 73 and 119 form a disulfide. The active-site Proton acceptor is the Glu164. 230–232 contributes to the substrate binding site; the sequence is KTG.

It belongs to the class-A beta-lactamase family.

It catalyses the reaction a beta-lactam + H2O = a substituted beta-amino acid. In terms of biological role, this enzyme hydrolyzes cefotaxime, ceftazidime and other broad spectrum cephalosporins. The sequence is that of Beta-lactamase SHV-2 (bla) from Escherichia coli.